The primary structure comprises 483 residues: BTB/POZ domain and ankyrin repeat-containing protein NBCL (483 aa).

In terms of domain architecture, BTB spans S25–P109. The C2HC NPR-type zinc finger occupies R115–T129. Zn(2+) is bound by residues C118, C123, H125, and C128. 4 ANK repeats span residues Q254–D283, E284–Y313, S318–V347, and D351–L385. The interval E401–A437 is disordered. Residues N403–A419 are compositionally biased toward low complexity.

Belongs to the plant 'ANKYRIN-BTB/POZ' family. 'NOOT-BOP-COCH-like' (NBCL) subfamily. Homodimer. Interacts with APP1 around the plasma membrane and in the nucleus; this interaction disturbs APP1-mediated regulation of the nuclear transcription factor Y subunit (NF-YA1). In terms of tissue distribution, mainly expressed in root nodules, to a lesser extent in shoot apical meristems (SAM) and root meristems (RM), and barely in leaves, non-nodulating roots and root apical meristems (RAM).

The protein localises to the nucleus. The protein resides in the cytoplasm. It is found in the cell membrane. Its pathway is protein modification; protein ubiquitination. Functionally, may act as a substrate-specific adapter of an E3 ubiquitin-protein ligase complex (CUL3-RBX1-BTB) which mediates the ubiquitination and subsequent proteasomal degradation of target proteins. Transcriptional co-regulator involved in the promotion of leaf and floral meristem fate and determinacy. Required for the abscission of senescent organs, probably by regulating the cell wall disorganization in abscission zones (AZs, e.g. pulvini at the base of leaves). Involved in the coordination of the symbiotic nodule developmental program; promotes the formation of root nodules by interacting directly with APP1 to modulate the expression of the nuclear transcription factor Y subunit (NF-YA1), a key nodulin. Necessary for the robust maintenance of nodule identity throughout the nodule developmental program. The sequence is that of BTB/POZ domain and ankyrin repeat-containing protein NBCL from Lotus japonicus (Lotus corniculatus var. japonicus).